A 347-amino-acid polypeptide reads, in one-letter code: Ribosomal RNA small subunit methyltransferase C (347 aa).

Belongs to the methyltransferase superfamily. RsmC family. In terms of assembly, monomer.

It localises to the cytoplasm. It carries out the reaction guanosine(1207) in 16S rRNA + S-adenosyl-L-methionine = N(2)-methylguanosine(1207) in 16S rRNA + S-adenosyl-L-homocysteine + H(+). In terms of biological role, specifically methylates the guanine in position 1207 of 16S rRNA in the 30S particle. The polypeptide is Ribosomal RNA small subunit methyltransferase C (Serratia proteamaculans (strain 568)).